We begin with the raw amino-acid sequence, 52 residues long: Ribosome modulation factor (52 aa).

This sequence belongs to the ribosome modulation factor family.

Its subcellular location is the cytoplasm. Its function is as follows. During stationary phase, converts 70S ribosomes to an inactive dimeric form (100S ribosomes). This Xenorhabdus nematophila (strain ATCC 19061 / DSM 3370 / CCUG 14189 / LMG 1036 / NCIMB 9965 / AN6) protein is Ribosome modulation factor.